A 219-amino-acid polypeptide reads, in one-letter code: MFTPYGMSTLVKLAAVSVGTLLFSILLPLQAAIPVGSAAAIFLIFSLWFFRDPNRSLPPGKGIVIAPADGTVMSIKACSHPFTGNGSSIISIFMSPLNVHVNRIPVTGTVTLLQHHPGSFSMAFDEKSGEENERMEIGIESNGMKLHFTQVAGFLARRIVCPLSLNEPVTAGKRFGMIKFGSRVDIVIPAGWLPEVKRGAKTRAGETIIARLATTAGNG.

The Schiff-base intermediate with substrate; via pyruvic acid role is filled by S182. S182 carries the post-translational modification Pyruvic acid (Ser); by autocatalysis.

This sequence belongs to the phosphatidylserine decarboxylase family. PSD-A subfamily. In terms of assembly, heterodimer of a large membrane-associated beta subunit and a small pyruvoyl-containing alpha subunit. Pyruvate serves as cofactor. In terms of processing, is synthesized initially as an inactive proenzyme. Formation of the active enzyme involves a self-maturation process in which the active site pyruvoyl group is generated from an internal serine residue via an autocatalytic post-translational modification. Two non-identical subunits are generated from the proenzyme in this reaction, and the pyruvate is formed at the N-terminus of the alpha chain, which is derived from the carboxyl end of the proenzyme. The post-translation cleavage follows an unusual pathway, termed non-hydrolytic serinolysis, in which the side chain hydroxyl group of the serine supplies its oxygen atom to form the C-terminus of the beta chain, while the remainder of the serine residue undergoes an oxidative deamination to produce ammonia and the pyruvoyl prosthetic group on the alpha chain.

It localises to the cell membrane. The enzyme catalyses a 1,2-diacyl-sn-glycero-3-phospho-L-serine + H(+) = a 1,2-diacyl-sn-glycero-3-phosphoethanolamine + CO2. It functions in the pathway phospholipid metabolism; phosphatidylethanolamine biosynthesis; phosphatidylethanolamine from CDP-diacylglycerol: step 2/2. Functionally, catalyzes the formation of phosphatidylethanolamine (PtdEtn) from phosphatidylserine (PtdSer). The chain is Phosphatidylserine decarboxylase proenzyme from Chlorobium phaeovibrioides (strain DSM 265 / 1930) (Prosthecochloris vibrioformis (strain DSM 265)).